Here is a 695-residue protein sequence, read N- to C-terminus: NADPH--cytochrome P450 reductase (695 aa).

Over 1–8 the chain is Lumenal; that stretch reads MAQLDTLD. The chain crosses the membrane as a helical span at residues 9–31; sequence VVVLAVLLAGSIAYFTKGTFWAV. Over 32–695 the chain is Cytoplasmic; sequence AKDPYASSGP…SGSYQEDVWS (664 aa). Positions 66–221 constitute a Flavodoxin-like domain; it reads CVIFYGSQTG…DFLAWKEPMW (156 aa). FMN contacts are provided by residues 72 to 77, 123 to 126, 169 to 178, and Asp204; these read SQTGTA, ATYG, and LGNNTYEHYN. The FAD-binding FR-type domain occupies 277 to 538; that stretch reads HNPYIAPIVE…HVRHSNFKLP (262 aa). Arg296 is a binding site for NADP(+). FAD contacts are provided by residues 451-454, 469-471, and 486-489; these read RYYS, TAV, and GVTT. The tract at residues 497-516 is disordered; it reads QKQNGDPSPDPHGQTYAING. NADP(+)-binding positions include Thr552, 614–615, 620–624, and Glu656; these read SR and KVYVQ. FAD is bound at residue Trp694.

This sequence belongs to the NADPH--cytochrome P450 reductase family. In the N-terminal section; belongs to the flavodoxin family. The protein in the C-terminal section; belongs to the flavoprotein pyridine nucleotide cytochrome reductase family. FAD serves as cofactor. It depends on FMN as a cofactor.

Its subcellular location is the endoplasmic reticulum membrane. It is found in the mitochondrion outer membrane. It localises to the cell membrane. The enzyme catalyses 2 oxidized [cytochrome P450] + NADPH = 2 reduced [cytochrome P450] + NADP(+) + H(+). In terms of biological role, this enzyme is required for electron transfer from NADP to cytochrome P450 in microsomes. It can also provide electron transfer to heme oxygenase and cytochrome B5. Involved in ergosterol biosynthesis. This Emericella nidulans (strain FGSC A4 / ATCC 38163 / CBS 112.46 / NRRL 194 / M139) (Aspergillus nidulans) protein is NADPH--cytochrome P450 reductase.